Here is a 2339-residue protein sequence, read N- to C-terminus: Voltage-dependent N-type calcium channel subunit alpha-1B (2339 aa).

Residues 1 to 37 (MVRFGDELGGRYGGPGGGERARGGGAGGAGGPGPGGL) form a disordered region. Topologically, residues 1–90 (MVRFGDELGG…DNVVRKYAKR (90 aa)) are cytoplasmic. Over residues 10 to 37 (GRYGGPGGGERARGGGAGGAGGPGPGGL) the composition is skewed to gly residues. At Arg22 the chain carries Omega-N-methylarginine. One copy of the I repeat lies at 82–359 (NVVRKYAKRI…LVLGVLSGEF (278 aa)). A helical transmembrane segment spans residues 91 to 114 (ITEWPPFEYMILATIIANCIVLAL). Residues 115–131 (EQHLPDGDKTPMSERLD) are Extracellular-facing. A helical membrane pass occupies residues 132-152 (DTEPYFIGIFCFEAGIKIIAL). Residues 153 to 163 (GFVFHKGSYLR) are Cytoplasmic-facing. The helical transmembrane segment at 164 to 182 (NGWNVMDFVVVLTGILATA) threads the bilayer. Residues 183 to 187 (GTDFD) lie on the Extracellular side of the membrane. The chain crosses the membrane as a helical span at residues 188 to 211 (LRTLRAVRVLRPLKLVSGIPSLQV). The Cytoplasmic segment spans residues 212 to 221 (VLKSIMKAMV). Residues 222 to 244 (PLLQIGLLLFFAILMFAIIGLEF) traverse the membrane as a helical segment. The Extracellular segment spans residues 245–331 (YMGKFHKACF…NTNDAAGNTW (87 aa)). Asn256 carries an N-linked (GlcNAc...) asparagine glycan. A helical membrane pass occupies residues 332–356 (NWLYFIPLIIIGSFFMLNLVLGVLS). The Cytoplasmic portion of the chain corresponds to 357–482 (GEFAKERERV…FFIRRMVKAQ (126 aa)). Residues 379–396 (QQIERELNGYLEWIFKAE) are binding to the beta subunit. Residue Ser411 is modified to Phosphoserine. 451 to 458 (ASLKSGKT) lines the ATP pocket. The stretch at 468–712 (EKMFRFFIRR…VFLAIAVDNL (245 aa)) is one II repeat. Residues 483 to 501 (SFYWVVLCVVALNTLCVAM) form a helical membrane-spanning segment. Topologically, residues 502–511 (VHYNQPRRLT) are extracellular. Residues 512-534 (TTLYFAEFVFLGLFLTEMSLKMY) form a helical membrane-spanning segment. Over 535-544 (GLGPRSYFRS) the chain is Cytoplasmic. Position 544 (Ser544) interacts with a 1,2-diacyl-sn-glycero-3-phospho-(1D-myo-inositol-4,5-bisphosphate). A helical membrane pass occupies residues 545-566 (SFNCFDFGVIVGSVFEVVWAAI). At 567 to 573 (KPGSSFG) the chain is on the extracellular side. A helical membrane pass occupies residues 574–586 (ISVLRALRLLRIF). Residues Arg584 and Lys587 each contribute to the a 1,2-diacyl-sn-glycero-3-phospho-(1D-myo-inositol-4,5-bisphosphate) site. Over 587–604 (KVTKYWSSLRNLVVSLLN) the chain is Cytoplasmic. The chain crosses the membrane as a helical span at residues 605–630 (SMKSIISLLFLLFLFIVVFALLGMQL). Residues 631–682 (FGGQFNFQDETPTTNFDTFPAAILTVFQILTGEDWNAVMYHGIESQGGVSKG) are Extracellular-facing. Residues 683 to 709 (MFSSFYFIVLTLFGNYTLLNVFLAIAV) traverse the membrane as a helical segment. Over 710-1151 (DNLANAQELT…FCHYIVTMRY (442 aa)) the chain is Cytoplasmic. Phosphoserine occurs at positions 745, 748, and 783. 4 stretches are compositionally biased toward basic and acidic residues: residues 816 to 826 (PLVVELGRDGA), 857 to 886 (KDKT…EERP), 922 to 932 (GSPEEAAEREP), and 965 to 976 (GPREAESGEEPA). Disordered stretches follow at residues 816-1038 (PLVV…VTVG) and 1054-1076 (QPED…DPNT). The segment covering 977 to 986 (RRHRARHKAQ) has biased composition (basic residues). A compositionally biased stretch (basic and acidic residues) spans 990 to 1029 (EAVEKETTEKEATEKEAEIVEADKEKELRNHQPREPHCDL). Phosphoserine is present on Ser1069. One copy of the III repeat lies at 1137–1419 (NLLRRFCHYI…IFVALIIITF (283 aa)). The helical transmembrane segment at 1152 to 1170 (FEVVILVVIALSSIALAAE) threads the bilayer. Over 1171–1178 (DPVRTDSP) the chain is Extracellular. A helical transmembrane segment spans residues 1179-1203 (RNNALKYLDYIFTGVFTFEMVIKMI). Topologically, residues 1204 to 1217 (DLGLLLHPGAYFRD) are cytoplasmic. Residues 1218–1238 (LWNILDFIVVSGALVAFAFSG) traverse the membrane as a helical segment. The Extracellular segment spans residues 1239-1244 (SKGKDI). A helical transmembrane segment spans residues 1245–1265 (NTIKSLRVLRVLRPLKTIKRL). Over 1266 to 1283 (PKLKAVFDCVVNSLKNVL) the chain is Cytoplasmic. Residues 1284–1303 (NILIVYMLFMFIFAVIAVQL) form a helical membrane-spanning segment. The Extracellular portion of the chain corresponds to 1304 to 1390 (FKGKFFYCTD…EQGPSPGYRM (87 aa)). A helical transmembrane segment spans residues 1391–1416 (ELSIFYVVYFVVFPFFFVNIFVALII). Over 1417–1471 (ITFQEQGDKVMSECSLEKNERACIDFAISAKPLTRYMPQNRQSFQYKTWTFVVSP) the chain is Cytoplasmic. The stretch at 1456 to 1711 (NRQSFQYKTW…LFVAVIMDNF (256 aa)) is one IV repeat. Residues 1472 to 1490 (PFEYFIMAMIALNTVVLMM) form a helical membrane-spanning segment. At 1491 to 1498 (KFYDAPYE) the chain is on the extracellular side. Residues 1499-1523 (YELMLKCLNIVFTSMFSMECVLKII) traverse the membrane as a helical segment. The Cytoplasmic portion of the chain corresponds to 1524-1533 (AFGVLNYFRD). The chain crosses the membrane as a helical span at residues 1534-1555 (AWNVFDFVTVLGSITDILVTEI). Residues 1556 to 1563 (AETNNFIN) lie on the Extracellular side of the membrane. Residue Asn1563 is glycosylated (N-linked (GlcNAc...) asparagine). Residues 1564 to 1582 (LSFLRLFRAARLIKLLRQG) form a helical membrane-spanning segment. At 1583-1601 (YTIRILLWTFVQSFKALPY) the chain is on the cytoplasmic side. A helical transmembrane segment spans residues 1602-1621 (VCLLIAMLFFIYAIIGMQVF). Topologically, residues 1622 to 1683 (GNIALDDDTS…ANATECGSDF (62 aa)) are extracellular. N-linked (GlcNAc...) asparagine glycosylation is present at Asn1675. Residues 1684 to 1707 (AYFYFVSFIFLCSFLMLNLFVAVI) traverse the membrane as a helical segment. The Cytoplasmic portion of the chain corresponds to 1708–2339 (MDNFEYLTRD…YHHPDQDHWC (632 aa)). An EF-hand domain is found at 1724 to 1759 (HHLDEFIRVWAEYDPAACGRISYNDMFEMLKHMSPP). 3 residues coordinate Ca(2+): Asp1737, Arg1743, and Asp1748. A compositionally biased stretch (polar residues) spans 1916 to 1931 (SSTSLSNGGAIQNQES). Disordered stretches follow at residues 1916 to 1968 (SSTS…VGRS) and 1981 to 2206 (TRRG…YKTA). Residues 1946-1960 (DAPHEARPPLERGHS) are compositionally biased toward basic and acidic residues. A compositionally biased stretch (basic residues) spans 2049 to 2063 (SHHHHHRCHRRRDRK). Ser2066 bears the Phosphoserine mark. A compositionally biased stretch (basic and acidic residues) spans 2098–2116 (CRRERERRQERGRSQERRQ). Low complexity predominate over residues 2143 to 2153 (PSLSSHPTSPT). Residues 2164-2180 (GSGSVNGSPLLSTSGAS) show a composition bias toward polar residues. A phosphoserine mark is found at Ser2224, Ser2233, and Ser2256.

Belongs to the calcium channel alpha-1 subunit (TC 1.A.1.11) family. CACNA1B subfamily. As to quaternary structure, multisubunit complex consisting of alpha-1, alpha-2, beta and delta subunits in a 1:1:1:1 ratio. The channel activity is directed by the pore-forming and voltage-sensitive alpha-1 subunit. In many cases, this subunit is sufficient to generate voltage-sensitive calcium channel activity. The auxiliary subunits beta and alpha-2/delta linked by a disulfide bridge regulate the channel activity. Interacts with RIMS1. Interacts with FMR1 (via C-terminus); this interaction induces a decrease in the number of presynaptic functional CACNA1B channels at the cell surface. Phosphorylated in vitro by CaM-kinase II, PKA, PKC and CGPK. In terms of tissue distribution, isoform Alpha-1b-1 and isoform Alpha-1b-2 are expressed in the central nervous system, but not in skeletal muscle or aorta. Expressed in the cerebral white matter, cortex, hippocampus, basal ganglia, and cerebellum.

It is found in the membrane. The catalysed reaction is Ca(2+)(in) = Ca(2+)(out). Its activity is regulated as follows. Is specifically blocked by omega-conotoxin GVIA. Is specifically blocked by omega-conotoxin MVIIA (ziconotide). Is insensitive to dihydropyridines (DHP). Is specifically blocked by omega-conotoxin MVIIA (ziconotide). Is insensitive to dihydropyridines (DHP). Its function is as follows. Voltage-sensitive calcium channels (VSCC) mediate the entry of calcium ions into excitable cells and are also involved in a variety of calcium-dependent processes, including muscle contraction, hormone or neurotransmitter release, gene expression, cell motility, cell division and cell death. This alpha-1B subunit gives rise to N-type calcium currents. N-type calcium channels belong to the 'high-voltage activated' (HVA) group. They are involved in pain signaling. Calcium channels containing alpha-1B subunit may play a role in directed migration of immature neurons. Mediates Ca(2+) release probability at hippocampal neuronal soma and synaptic terminals. Functionally, voltage-sensitive calcium channels (VSCC) mediate the entry of calcium ions into excitable cells and are also involved in a variety of calcium-dependent processes, including muscle contraction, hormone or neurotransmitter release, gene expression, cell motility, cell division and cell death. This alpha-1B subunit gives rise to N-type calcium currents. In Homo sapiens (Human), this protein is Voltage-dependent N-type calcium channel subunit alpha-1B (CACNA1B).